A 184-amino-acid polypeptide reads, in one-letter code: Putative pre-16S rRNA nuclease (184 aa).

Positions 1-23 (MFSSQHRLLYQPSGPDLSKNLDP) are disordered.

Belongs to the YqgF nuclease family.

The protein resides in the cytoplasm. Could be a nuclease involved in processing of the 5'-end of pre-16S rRNA. The sequence is that of Putative pre-16S rRNA nuclease from Mycobacterium leprae (strain Br4923).